A 530-amino-acid chain; its full sequence is Glutamate--cysteine ligase (530 aa).

It belongs to the glutamate--cysteine ligase type 1 family. Type 1 subfamily.

The enzyme catalyses L-cysteine + L-glutamate + ATP = gamma-L-glutamyl-L-cysteine + ADP + phosphate + H(+). It participates in sulfur metabolism; glutathione biosynthesis; glutathione from L-cysteine and L-glutamate: step 1/2. The polypeptide is Glutamate--cysteine ligase (Pseudomonas entomophila (strain L48)).